A 1235-amino-acid polypeptide reads, in one-letter code: Insulin receptor substrate 1 (1235 aa).

Ser3 is subject to Phosphoserine. Residues 3–133 (SPPDTDGFSD…AGGGCGGSCS (131 aa)) form a mediates interaction with PHIP region. The 104-residue stretch at 12–115 (DVRKVGYLRK…WYQALLQLHN (104 aa)) folds into the PH domain. Ser99 bears the Phosphoserine; by CK2 mark. Residues 155 to 259 (FKEVWQVILK…EAMRAMSDEF (105 aa)) enclose the IRS-type PTB domain. Residues 258–425 (EFRPRTKSQS…SDGGFISSDE (168 aa)) are disordered. Phosphoserine; by RPS6KB1 occurs at positions 265 and 302. The segment covering 265–276 (SQSSSSCSNPIS) has biased composition (low complexity). At Ser307 the chain carries Phosphoserine; by IKKB, MAPK8 and RPS6KB1. Phosphoserine is present on residues Ser318, Ser325, Ser340, and Ser343. Over residues 349-358 (THAHRHRGSS) the composition is skewed to basic residues. 2 stretches are compositionally biased toward low complexity: residues 378–399 (SPSA…GSTS) and 407–419 (SSAS…SDGG). Position 414 is a phosphoserine (Ser414). Thr441 and Thr448 each carry phosphothreonine. Tyr460 carries the phosphotyrosine; by INSR modification. Residues 460-463 (YICM) carry the YXXM motif 1 motif. Thr502 is subject to Phosphothreonine; by CK2. The segment at 520-539 (THSAGTSPTISHQKTPSQSS) is disordered. Position 522 is a phosphoserine; by RPS6KB1 (Ser522). Polar residues predominate over residues 522–539 (SAGTSPTISHQKTPSQSS). Short sequence motifs (YXXM motif) lie at residues 546 to 549 (YTEM) and 608 to 611 (YMPM). Tyr608 carries the post-translational modification Phosphotyrosine; by INSR. The residue at position 612 (Ser612) is a Phosphoserine. At Tyr628 the chain carries Phosphotyrosine; by INSR. The YXXM motif 4 motif lies at 628–631 (YMPM). At Ser632 the chain carries Phosphoserine; by RPS6KB1 and ROCK2. Phosphotyrosine is present on Tyr658. The short motif at 658–661 (YMMM) is the YXXM motif 5 element. Residues 669–689 (PDIGGGSCSSSSISAAPSGSS) are compositionally biased toward low complexity. Residues 669 to 720 (PDIGGGSCSSSSISAAPSGSSYGKPWTNGVGGHHTHALPHAKPPVESGGGKL) are disordered. The YXXM motif 6 signature appears at 727 to 730 (YMNM). The tract at residues 766 to 921 (FKHTQRPGEP…ATSRSSPSVR (156 aa)) is disordered. A compositionally biased stretch (basic and acidic residues) spans 771-780 (RPGEPEEGAR). 3 stretches are compositionally biased toward low complexity: residues 785-794 (RLSSSSGRLR), 801-810 (DSSSSTSSDS), and 872-881 (QQQQQQQQQQ). Ser789 is subject to Phosphoserine; by AMPK and SIK2. Ser891 is modified (phosphoserine). Phosphotyrosine; by INSR is present on residues Tyr895, Tyr939, and Tyr987. Residues 895 to 897 (YVN) form a GRB2-binding region. Short sequence motifs (YXXM motif) lie at residues 939-942 (YMNM), 987-990 (YMTM), and 1010-1013 (YADM). Positions 1024-1165 (LPRTTGAAPP…SAPGCGAAGG (142 aa)) are disordered. Positions 1025-1046 (PRTTGAAPPPSSTASASASVTP) are enriched in low complexity. Over residues 1072 to 1084 (TRVNLSPNHNQSA) the composition is skewed to polar residues. Ser1099 is subject to Phosphoserine. Ser1100 is subject to Phosphoserine; by RPS6KB1. The segment covering 1101–1114 (ETFSAPTRAANTVS) has biased composition (polar residues). Positions 1118–1128 (GAAGGGSGGGS) are enriched in gly residues. Tyr1172 is subject to Phosphotyrosine; by INSR. The segment at 1177–1235 (LVKDVKQHPQDCPSQQQSLPPPPPHQPLGSNEGSSPRRSSEDLSTYASINFQKQPEDRQ) is disordered. Lys1179 participates in a covalent cross-link: Glycyl lysine isopeptide (Lys-Gly) (interchain with G-Cter in ubiquitin). The segment covering 1204-1229 (LGSNEGSSPRRSSEDLSTYASINFQK) has biased composition (polar residues). Tyr1222 bears the Phosphotyrosine; by INSR mark.

As to quaternary structure, interacts with SOCS7. Interacts (via IRS-type PTB domain) with IGF1R and INSR (via the tyrosine-phosphorylated NPXY motif). Interacts with UBTF, FER and PIK3CA. Interacts (via phosphorylated YXXM motifs) with PIK3R1. Interacts with ROCK1. Interacts (via PH domain) with PHIP. Interacts with GRB2. Interacts with ALK. Interacts with EIF2AK2/PKR. Interacts with GKAP1. Interacts with DGKZ in the absence of insulin; insulin stimulation decreases this interaction. Found in a ternary complex with DGKZ and PIP5K1A in the absence of insulin stimulation. Interacts with SQSTM1; the interaction is disrupted by the presence of tensin TNS2. Interacts with NCK1 (via SH2 domain). Interacts with NCK2 (via SH3 domain). Interacts with SH2B1; this interaction enhances leptin-induced activation of the PI3-kinase pathway. Interacts with DVL2; this interaction promotes the Wnt/beta-catenin signaling pathway. Interacts with JAK1. In terms of processing, serine phosphorylation of IRS1 is a mechanism for insulin resistance. Ser-307 phosphorylation inhibits insulin action through disruption of IRS1 interaction with the insulin receptor, and Ser-789 phosphorylation is increased in the liver of insulin-resistant rats. Phosphorylation of Tyr-895 is required for GRB2-binding. Phosphorylated by ALK. Phosphorylated at Ser-265, Ser-302, Ser-632 and Ser-1100 by RPS6KB1; phosphorylation induces accelerated degradation of IRS1. Phosphorylated on tyrosine residues in response to insulin. In skeletal muscles, dephosphorylated on Tyr-608 by TNS2 under anabolic conditions; dephosphorylation results in the proteasomal degradation of IRS1. Post-translationally, ubiquitinated by the Cul7-RING(FBXW8) complex in a mTOR-dependent manner, leading to its degradation: the Cul7-RING(FBXW8) complex recognizes and binds IRS1 previously phosphorylated by S6 kinase (RPS6KB1 or RPS6KB2). Ubiquitinated by TRAF4 through 'Lys-29' linkage; this ubiquitination regulates the interaction of IRS1 with IGFR and IRS1 tyrosine phosphorylation upon IGF1 stimulation. S-nitrosylation at by BLVRB inhibits its activity.

The protein localises to the cytoplasm. The protein resides in the nucleus. Functionally, signaling adapter protein that participates in the signal transduction from two prominent receptor tyrosine kinases, insulin receptor/INSR and insulin-like growth factor I receptor/IGF1R. Plays therefore an important role in development, growth, glucose homeostasis as well as lipid metabolism. Upon phosphorylation by the insulin receptor, functions as a signaling scaffold that propagates insulin action through binding to SH2 domain-containing proteins including the p85 regulatory subunit of PI3K, NCK1, NCK2, GRB2 or SHP2. Recruitment of GRB2 leads to the activation of the guanine nucleotide exchange factor SOS1 which in turn triggers the Ras/Raf/MEK/MAPK signaling cascade. Activation of the PI3K/AKT pathway is responsible for most of insulin metabolic effects in the cell, and the Ras/Raf/MEK/MAPK is involved in the regulation of gene expression and in cooperation with the PI3K pathway regulates cell growth and differentiation. Acts a positive regulator of the Wnt/beta-catenin signaling pathway through suppression of DVL2 autophagy-mediated degradation leading to cell proliferation. This is Insulin receptor substrate 1 (Irs1) from Rattus norvegicus (Rat).